The primary structure comprises 249 residues: Triosephosphate isomerase (249 aa).

Residue 8 to 10 (NWK) participates in substrate binding. His-95 (electrophile) is an active-site residue. The Proton acceptor role is filled by Glu-163. Substrate-binding residues include Gly-169 and Ser-209.

Belongs to the triosephosphate isomerase family. In terms of assembly, homodimer.

It is found in the cytoplasm. The enzyme catalyses D-glyceraldehyde 3-phosphate = dihydroxyacetone phosphate. It functions in the pathway carbohydrate biosynthesis; gluconeogenesis. The protein operates within carbohydrate degradation; glycolysis; D-glyceraldehyde 3-phosphate from glycerone phosphate: step 1/1. Its function is as follows. Involved in the gluconeogenesis. Catalyzes stereospecifically the conversion of dihydroxyacetone phosphate (DHAP) to D-glyceraldehyde-3-phosphate (G3P). This Orientia tsutsugamushi (strain Ikeda) (Rickettsia tsutsugamushi) protein is Triosephosphate isomerase.